A 513-amino-acid chain; its full sequence is 2-isopropylmalate synthase (513 aa).

The Pyruvate carboxyltransferase domain maps to 5 to 267; the sequence is LVIFDTTLRD…ETRIDTTQIV (263 aa). Mn(2+) contacts are provided by Asp14, His202, His204, and Asn238. The interval 393-513 is regulatory domain; sequence KLVYSRVCSE…LDKVKAQGGV (121 aa).

The protein belongs to the alpha-IPM synthase/homocitrate synthase family. LeuA type 1 subfamily. As to quaternary structure, homodimer. Mn(2+) is required as a cofactor.

The protein localises to the cytoplasm. It catalyses the reaction 3-methyl-2-oxobutanoate + acetyl-CoA + H2O = (2S)-2-isopropylmalate + CoA + H(+). It functions in the pathway amino-acid biosynthesis; L-leucine biosynthesis; L-leucine from 3-methyl-2-oxobutanoate: step 1/4. Catalyzes the condensation of the acetyl group of acetyl-CoA with 3-methyl-2-oxobutanoate (2-ketoisovalerate) to form 3-carboxy-3-hydroxy-4-methylpentanoate (2-isopropylmalate). The polypeptide is 2-isopropylmalate synthase (Dechloromonas aromatica (strain RCB)).